Consider the following 208-residue polypeptide: Protein-L-isoaspartate O-methyltransferase (208 aa).

Ser59 is an active-site residue.

Belongs to the methyltransferase superfamily. L-isoaspartyl/D-aspartyl protein methyltransferase family.

The protein resides in the cytoplasm. It catalyses the reaction [protein]-L-isoaspartate + S-adenosyl-L-methionine = [protein]-L-isoaspartate alpha-methyl ester + S-adenosyl-L-homocysteine. Functionally, catalyzes the methyl esterification of L-isoaspartyl residues in peptides and proteins that result from spontaneous decomposition of normal L-aspartyl and L-asparaginyl residues. It plays a role in the repair and/or degradation of damaged proteins. This is Protein-L-isoaspartate O-methyltransferase from Vibrio campbellii (strain ATCC BAA-1116).